The sequence spans 259 residues: Phosphate import ATP-binding protein PstB (259 aa).

The ABC transporter domain occupies 11–254; the sequence is AEARNLNFYY…PQDKRTEDYI (244 aa). An ATP-binding site is contributed by 43 to 50; it reads GPSGCGKS.

Belongs to the ABC transporter superfamily. Phosphate importer (TC 3.A.1.7) family. The complex is composed of two ATP-binding proteins (PstB), two transmembrane proteins (PstC and PstA) and a solute-binding protein (PstS).

Its subcellular location is the cell inner membrane. It catalyses the reaction phosphate(out) + ATP + H2O = ADP + 2 phosphate(in) + H(+). Its function is as follows. Part of the ABC transporter complex PstSACB involved in phosphate import. Responsible for energy coupling to the transport system. This is Phosphate import ATP-binding protein PstB from Dechloromonas aromatica (strain RCB).